The primary structure comprises 3412 residues: Genome polyprotein (3412 aa).

The Cytoplasmic segment spans residues 1–104 (MSGRKAQGKT…LSSRKRRSSE (104 aa)). Positions 38–72 (PGPSRGVQGFIFFFLFNILTGKKLTTHLKRLWRML) are hydrophobic; homodimerization of capsid protein C. The propeptide at 102–121 (SSEMTMMPLLILSMVILGGG) is ER anchor for the capsid protein C, removed in mature form by serine protease NS3. Residues 105 to 125 (MTMMPLLILSMVILGGGVTLV) traverse the membrane as a helical segment. Residues 126–244 (RKNRWLLLNV…GERQLQKIER (119 aa)) are Extracellular-facing. N-linked (GlcNAc...) asparagine; by host glycosylation is found at Asn134 and Asn150. Residues 245 to 265 (WLVRNPFFAVTALAIAYLVGN) traverse the membrane as a helical segment. Residues 266–270 (NKTQR) are Cytoplasmic-facing. The chain crosses the membrane as a helical span at residues 271–285 (VVIALLVLAVGPAYS). Topologically, residues 286–730 (AHCIGITDRD…TVFGSAFQGL (445 aa)) are extracellular. Disulfide bonds link Cys288/Cys315, Cys345/Cys401, Cys345/Cys406, Cys359/Cys390, Cys377/Cys401, Cys377/Cys406, Cys467/Cys568, and Cys585/Cys615. The fusion peptide stretch occupies residues 383–396 (DRGWGNGCGLFGKG). A helical transmembrane segment spans residues 731 to 751 (FGGLSWITKVIMGAVLIWVGI). Over 752–757 (NTRNMT) the chain is Extracellular. Residues 758–778 (MSMSMILVGVIMMFLSLGVGA) traverse the membrane as a helical segment. Topologically, residues 779-1132 (DQGCAVNFGK…LVRSWVTAGE (354 aa)) are extracellular. 6 cysteine pairs are disulfide-bonded: Cys782–Cys793, Cys833–Cys921, Cys957–Cys1002, Cys1058–Cys1107, Cys1069–Cys1091, and Cys1090–Cys1094. Residues Asn908 and Asn986 are each glycosylated (N-linked (GlcNAc...) asparagine; by host). Residues 1133 to 1153 (VHAVPFGLVSMMIAMEVVLRK) traverse the membrane as a helical segment. The Cytoplasmic segment spans residues 1154-1201 (RQGPKQMLVGGIILLGAMLVGQVTMLDLVKLIVAVGLHFHEINNGGDA). A helical membrane pass occupies residues 1202–1222 (MYMALIASFSIRPGLLIGFGL). At 1223-1287 (RTLWSPRERL…ILPLMALLTP (65 aa)) the chain is on the lumenal side. A helical membrane pass occupies residues 1288–1308 (VTMYEVRMATMLFCTVVIVGV). The Cytoplasmic portion of the chain corresponds to 1309–1355 (LHQNSKDTSMQKTIPIVALTLTSYMGLTQPFLGLCAYMSTQVFGRRS). Residues 1356-1376 (IPVNEALAAAGLVGVLAGLAF) traverse the membrane as a helical segment. Residues 1377 to 1378 (QD) lie on the Lumenal side of the membrane. Residues 1379-1399 (MENFLGPIAVGGILMMLVSVA) traverse the membrane as a helical segment. Topologically, residues 1400–1456 (GKVDGLELKKLGEVSWEEEAEISGSSSRYDVALSEQGEFKLLSEDKVPWDQIVMTSL) are cytoplasmic. Residues 1407–1446 (LKKLGEVSWEEEAEISGSSSRYDVALSEQGEFKLLSEDKV) are interacts with and activates NS3 protease. An intramembrane region (helical) is located at residues 1457–1477 (ALVGAAIHPFALLLVLGGWVL). Residues 1478-2157 (HIKGARRSGD…RNALSMMPEA (680 aa)) are Cytoplasmic-facing. The region spanning 1485–1665 (SGDVLWDIPT…EVKEESKEEL (181 aa)) is the Peptidase S7 domain. Active-site charge relay system; for serine protease NS3 activity residues include His1537, Asp1561, and Ser1622. A Helicase ATP-binding domain is found at 1669–1825 (PTMLKKGMTT…HSNGEIEDVQ (157 aa)). The interval 1673-1676 (KKGM) is important for RNA-binding. 1682–1689 (FHPGAGKT) lines the ATP pocket. A DEAH box motif is present at residues 1773 to 1776 (DEAH). The region spanning 1820–1997 (EIEDVQTDIP…VRGGMVAPLY (178 aa)) is the Helicase C-terminal domain. Lys1877 is modified (N6-acetyllysine; by host). Positions 1942–1961 (AAQRRGRIGRNPNRDGDSYY) are disordered. A helical membrane pass occupies residues 2158 to 2178 (MTIVMLFILAGLLTSGMVIFF). At 2179–2186 (MSPKGMSR) the chain is on the lumenal side. Positions 2187–2207 (MSMAMGTMAGSGYLMFLGGVK) form an intramembrane region, helical. The Lumenal segment spans residues 2208 to 2209 (PT). Residues 2210–2230 (HISYVMLIFFVLMVVIIPEPG) form a helical membrane-spanning segment. Residues 2231-2241 (QQRSIQDNQVA) are Cytoplasmic-facing. A helical membrane pass occupies residues 2242 to 2262 (YLIIGILTLLSVVAANELGML). Residues 2263–2293 (EKTKEDFFGKRNIATSGGTIPWSWPDLDLKP) lie on the Lumenal side of the membrane. The helical intramembrane region spans 2294–2314 (GAAWTVYVGIVTMLSPMLHHW). Residues 2315-2360 (IKVEYGNLSLSGIAQSASVLSFMDKGVPFMKMNISVVILLVSGWNS) lie on the Lumenal side of the membrane. The helical transmembrane segment at 2361–2380 (ITVIPLLCGVGGAMLHWTLI) threads the bilayer. At 2381–2421 (LPGIKAQQSKLAQKRVFHGVAKNPVVDGNPTADIEEAPEMP) the chain is on the cytoplasmic side. Residues 2422–2442 (ALYEKKLALYLLLALSLMSVA) traverse the membrane as a helical segment. The Lumenal portion of the chain corresponds to 2443–2445 (MCR). A helical transmembrane segment spans residues 2446–2466 (TPFSLAEGIVLSSAALGPLIE). At 2467-3411 (GNTSLLWNGP…VDADLQPGEL (945 aa)) the chain is on the cytoplasmic side. The mRNA cap 0-1 NS5-type MT domain maps to 2508 to 2772 (GSANGKTLGE…DVILPIGTRS (265 aa)). S-adenosyl-L-methionine is bound at residue Ser2563. Position 2563 is a phosphoserine (Ser2563). Lys2568 serves as the catalytic For 2'-O-MTase activity. Positions 2593, 2594, 2611, 2612, 2638, and 2639 each coordinate S-adenosyl-L-methionine. The For 2'-O-MTase activity role is filled by Asp2653. Ile2654 is an S-adenosyl-L-methionine binding site. Active-site for 2'-O-MTase activity residues include Lys2689 and Glu2725. Tyr2727 serves as a coordination point for S-adenosyl-L-methionine. A Nuclear localization signal motif is present at residues 2879 to 2912 (RKIMRVVNRWLFRHLAREKKPRLCTKEEFIAKVR). Residues Glu2946, His2950, Cys2955, and Cys2958 each coordinate Zn(2+). In terms of domain architecture, RdRp catalytic spans 3036–3188 (GGFYADDTAG…KPVDDRFGLA (153 aa)). The Zn(2+) site is built by His3223, Cys3239, and Cys3358.

In the N-terminal section; belongs to the class I-like SAM-binding methyltransferase superfamily. mRNA cap 0-1 NS5-type methyltransferase family. Homodimer. Interacts (via N-terminus) with host EXOC1 (via C-terminus); this interaction results in EXOC1 degradation through the proteasome degradation pathway. In terms of assembly, forms heterodimers with envelope protein E in the endoplasmic reticulum and Golgi. As to quaternary structure, homodimer; in the endoplasmic reticulum and Golgi. Interacts with protein prM. Interacts with non-structural protein 1. Homodimer; Homohexamer when secreted. Interacts with envelope protein E. In terms of assembly, interacts (via N-terminus) with serine protease NS3. As to quaternary structure, forms a heterodimer with serine protease NS3. May form homooligomers. Forms a heterodimer with NS2B. Interacts with non-structural protein 2A (via N-terminus). Interacts with NS4B. Interacts with unphosphorylated RNA-directed RNA polymerase NS5; this interaction stimulates RNA-directed RNA polymerase NS5 guanylyltransferase activity. NS3 interacts with host PDCD6IP; this interaction contributes to virion release. In terms of assembly, interacts with serine protease NS3. As to quaternary structure, homodimer. Interacts with host STAT2; this interaction prevents the establishment of cellular antiviral state. Interacts with serine protease NS3. Interacts with host TRIM23; this interaction leads to NS5 ubiquitination. Specific enzymatic cleavages in vivo yield mature proteins. The nascent capsid protein C contains a C-terminal hydrophobic domain that act as a signal sequence for translocation of prM into the lumen of the ER. Mature capsid protein C is cleaved at a site upstream of this hydrophobic domain by NS3. prM is cleaved in post-Golgi vesicles by a host furin, releasing the mature small envelope protein M, and peptide pr. Non-structural protein 2A-alpha, a C-terminally truncated form of non-structural protein 2A, results from partial cleavage by NS3. Specific enzymatic cleavages in vivo yield mature proteins peptide 2K acts as a signal sequence and is removed from the N-terminus of NS4B by the host signal peptidase in the ER lumen. Signal cleavage at the 2K-4B site requires a prior NS3 protease-mediated cleavage at the 4A-2K site. Post-translationally, cleaved in post-Golgi vesicles by a host furin, releasing the mature small envelope protein M, and peptide pr. This cleavage is incomplete as up to 30% of viral particles still carry uncleaved prM. In terms of processing, N-glycosylated. N-glycosylated. The excreted form is glycosylated and this is required for efficient secretion of the protein from infected cells. Post-translationally, polyubiquitinated; ubiquitination is probably mediated by host TRIM23 and is prerequisite for NS5-STAT2 interaction. NS5 is not ISGylated or sumoylated. In terms of processing, acetylated by host KAT5. Acetylation modulates NS3 RNA-binding and unwinding activities and plays an important positive role for viral replication. Phosphorylated on serines residues. This phosphorylation may trigger NS5 nuclear localization.

It is found in the virion. It localises to the host nucleus. Its subcellular location is the host cytoplasm. The protein resides in the host perinuclear region. The protein localises to the secreted. It is found in the virion membrane. It localises to the host endoplasmic reticulum membrane. It catalyses the reaction Selective hydrolysis of -Xaa-Xaa-|-Yaa- bonds in which each of the Xaa can be either Arg or Lys and Yaa can be either Ser or Ala.. It carries out the reaction RNA(n) + a ribonucleoside 5'-triphosphate = RNA(n+1) + diphosphate. The enzyme catalyses a ribonucleoside 5'-triphosphate + H2O = a ribonucleoside 5'-diphosphate + phosphate + H(+). The catalysed reaction is ATP + H2O = ADP + phosphate + H(+). It catalyses the reaction a 5'-end (5'-triphosphoguanosine)-ribonucleoside in mRNA + S-adenosyl-L-methionine = a 5'-end (N(7)-methyl 5'-triphosphoguanosine)-ribonucleoside in mRNA + S-adenosyl-L-homocysteine. It carries out the reaction a 5'-end (N(7)-methyl 5'-triphosphoguanosine)-ribonucleoside in mRNA + S-adenosyl-L-methionine = a 5'-end (N(7)-methyl 5'-triphosphoguanosine)-(2'-O-methyl-ribonucleoside) in mRNA + S-adenosyl-L-homocysteine + H(+). Plays a role in virus budding by binding to the cell membrane and gathering the viral RNA into a nucleocapsid that forms the core of a mature virus particle. During virus entry, may induce genome penetration into the host cytoplasm after hemifusion induced by the surface proteins. Can migrate to the cell nucleus where it modulates host functions. Its function is as follows. Inhibits RNA silencing by interfering with host Dicer. Functionally, prevents premature fusion activity of envelope proteins in trans-Golgi by binding to envelope protein E at pH6.0. After virion release in extracellular space, gets dissociated from E dimers. In terms of biological role, acts as a chaperone for envelope protein E during intracellular virion assembly by masking and inactivating envelope protein E fusion peptide. prM is the only viral peptide matured by host furin in the trans-Golgi network probably to avoid catastrophic activation of the viral fusion activity in acidic Golgi compartment prior to virion release. prM-E cleavage is inefficient, and many virions are only partially matured. These uncleaved prM would play a role in immune evasion. May play a role in virus budding. Exerts cytotoxic effects by activating a mitochondrial apoptotic pathway through M ectodomain. May display a viroporin activity. Its function is as follows. Binds to host cell surface receptor and mediates fusion between viral and cellular membranes. Envelope protein is synthesized in the endoplasmic reticulum in the form of heterodimer with protein prM. They play a role in virion budding in the ER, and the newly formed immature particle is covered with 60 spikes composed of heterodimer between precursor prM and envelope protein E. The virion is transported to the Golgi apparatus where the low pH causes dissociation of PrM-E heterodimers and formation of E homodimers. prM-E cleavage is inefficient, and many virions are only partially matured. These uncleaved prM would play a role in immune evasion. Functionally, involved in immune evasion, pathogenesis and viral replication. Once cleaved off the polyprotein, is targeted to three destinations: the viral replication cycle, the plasma membrane and the extracellular compartment. Essential for viral replication. Required for formation of the replication complex and recruitment of other non-structural proteins to the ER-derived membrane structures. Excreted as a hexameric lipoparticle that plays a role against host immune response. Antagonizing the complement function. Binds to the host macrophages and dendritic cells. Inhibits signal transduction originating from Toll-like receptor 3 (TLR3). In terms of biological role, component of the viral RNA replication complex that functions in virion assembly and antagonizes the host immune response. Required cofactor for the serine protease function of NS3. May have membrane-destabilizing activity and form viroporins. Its function is as follows. Displays three enzymatic activities: serine protease, NTPase and RNA helicase. NS3 serine protease, in association with NS2B, performs its autocleavage and cleaves the polyprotein at dibasic sites in the cytoplasm: C-prM, NS2A-NS2B, NS2B-NS3, NS3-NS4A, NS4A-2K and NS4B-NS5. NS3 RNA helicase binds RNA and unwinds dsRNA in the 3' to 5' direction. Also plays a role in virus assembly. Functionally, regulates the ATPase activity of the NS3 helicase activity. NS4A allows NS3 helicase to conserve energy during unwinding. In terms of biological role, functions as a signal peptide for NS4B and is required for the interferon antagonism activity of the latter. Induces the formation of ER-derived membrane vesicles where the viral replication takes place. Inhibits interferon (IFN)-induced host STAT1 phosphorylation and nuclear translocation, thereby preventing the establishment of cellular antiviral state by blocking the IFN-alpha/beta pathway. Its function is as follows. Replicates the viral (+) and (-) RNA genome, and performs the capping of genomes in the cytoplasm. NS5 methylates viral RNA cap at guanine N-7 and ribose 2'-O positions. Besides its role in RNA genome replication, also prevents the establishment of cellular antiviral state by blocking the interferon-alpha/beta (IFN-alpha/beta) signaling pathway. IFN-I induces binding of NS5 to host IFN-activated transcription factor STAT2, preventing its transcriptional activity. Host TRIM23 is the E3 ligase that interacts with and polyubiquitinates NS5 to promote its binding to STAT2 and trigger IFN-I signaling inhibition. The chain is Genome polyprotein from Yellow fever virus (isolate Uganda/A7094A4/1948) (YFV).